A 180-amino-acid polypeptide reads, in one-letter code: NAD(P)H-quinone oxidoreductase subunit J (180 aa).

Residues 1 to 16 (MNEETQTSELTNTDQG) are compositionally biased toward polar residues. Residues 1–23 (MNEETQTSELTNTDQGPQIEPGP) form a disordered region.

This sequence belongs to the complex I 30 kDa subunit family. NDH-1 can be composed of about 15 different subunits; different subcomplexes with different compositions have been identified which probably have different functions.

It is found in the cellular thylakoid membrane. It catalyses the reaction a plastoquinone + NADH + (n+1) H(+)(in) = a plastoquinol + NAD(+) + n H(+)(out). The catalysed reaction is a plastoquinone + NADPH + (n+1) H(+)(in) = a plastoquinol + NADP(+) + n H(+)(out). In terms of biological role, NDH-1 shuttles electrons from an unknown electron donor, via FMN and iron-sulfur (Fe-S) centers, to quinones in the respiratory and/or the photosynthetic chain. The immediate electron acceptor for the enzyme in this species is believed to be plastoquinone. Couples the redox reaction to proton translocation, and thus conserves the redox energy in a proton gradient. Cyanobacterial NDH-1 also plays a role in inorganic carbon-concentration. The polypeptide is NAD(P)H-quinone oxidoreductase subunit J (Prochlorococcus marinus (strain MIT 9211)).